Consider the following 384-residue polypeptide: Probable UDP-galactopyranose mutase (384 aa).

The signal sequence occupies residues 1 to 19 (MNNKNIMIVGAGFSGVVIA). FAD is bound by residues Ser-14, 33–34 (DR), Asn-41, and 60–61 (HI). UDP-alpha-D-galactose is bound by residues Asn-84, Phe-151, Thr-156, Trp-160, and Tyr-185. Phe-219 serves as a coordination point for FAD. Positions 270, 280, and 314 each coordinate UDP-alpha-D-galactose. FAD is bound at residue Arg-343. Tyr-349 is a UDP-alpha-D-galactose binding site. An FAD-binding site is contributed by 350-355 (LDMDVT).

Belongs to the UDP-galactopyranose/dTDP-fucopyranose mutase family. Homodimer. FAD serves as cofactor.

It carries out the reaction UDP-alpha-D-galactose = UDP-alpha-D-galactofuranose. It participates in bacterial outer membrane biogenesis; LPS O-antigen biosynthesis. Functionally, catalyzes the interconversion through a 2-keto intermediate of uridine diphosphogalactopyranose (UDP-GalP) into uridine diphosphogalactofuranose (UDP-GalF). This chain is Probable UDP-galactopyranose mutase (rfbD), found in Klebsiella pneumoniae.